A 552-amino-acid polypeptide reads, in one-letter code: MSTDFDRIYLNQSKFSGRFRIADSGLGWKISTSGGSAANQARKPFLLPATELSTVQWSRGCRGYDLKINTKNQGVIQLDGFSQDDYNLIKNDFHRRFNIQVEQREHSLRGWNWGKTDLARNEMVFALNGKPTFEIPYARINNTNLTSKNEVGIEFNIQDEEYQPAGDELVEMRFYIPGVIQTNVDENMTKKEESSNEVVPKKEDGAEGEDVQMAVEEKSMAEAFYEELKEKADIGEVAGDAIVSFQDVFFTTPRGRYDIDIYKNSIRLRGKTYEYKLQHRQIQRIVSLPKADDIHHLLVLAIEPPLRQGQTTYPFLVLQFQKDEETEVQLNLEDEDYEENYKDKLKKQYDAKTHIVLSHVLKGLTDRRVIVPGEYKSKYDQCAVSCSFKANEGYLYPLDNAFFFLTKPTLYIPFSDVSMVNISRAGQTSTSSRTFDLEVVLRSNRGSTTFANISKEEQQLLEQFLKSKNLRVKNEDREVQERLQTALGSDSDEEDINMGSAGEDDESVDEDFQVSSDNDADEVAEEFDSDAALSDAEGGSDEERPSKKPKVE.

The segment covering 190-205 (KKEESSNEVVPKKEDG) has biased composition (basic and acidic residues). Disordered stretches follow at residues 190–209 (KKEESSNEVVPKKEDGAEGE) and 484–552 (QTAL…PKVE). Over residues 490–529 (DSDEEDINMGSAGEDDESVDEDFQVSSDNDADEVAEEFDS) the composition is skewed to acidic residues. A compositionally biased stretch (basic and acidic residues) spans 541–552 (DEERPSKKPKVE).

Belongs to the SSRP1 family. Forms a stable heterodimer with SPT16. The SPT16-POB3 dimer weakly associates with multiple molecules of NHP6 (NHP6A or NHP6B) to form the FACT (yFACT or SNP) complex. The FACT complex interacts with the CK2 (casein kinase II) complex subunits CKA1, CKA2, CKB1 and CKB2 and the components of the transcription machinery CHD1, CTR9, PAF1 and CDC73. The FACT complex interacts with the PAF1 complex. SPT16 interacts with SAS3 and POL1. Interacts directly with RFA1.

Its subcellular location is the nucleus. The protein localises to the chromosome. Component of the FACT complex, a general chromatin factor that acts to reorganize nucleosomes. The FACT complex is involved in multiple processes that require DNA as a template such as mRNA elongation, DNA replication and DNA repair. During transcription elongation the FACT complex acts as a histone chaperone that both destabilizes and restores nucleosomal structure. It facilitates the passage of RNA polymerase II and transcription by promoting the dissociation of one histone H2A-H2B dimer from the nucleosome, then subsequently promotes the reestablishment of the nucleosome following the passage of RNA polymerase II. Transcription elongation is promoted by the repression of transcription initiation from cryptic sites. Also acts in establishing transcription initiation complexes and promotes SPT15/TBP-binding to a TATA box. Together with replication factor-A protein (RPA), FACT may play a role in nucleosome deposition during DNA replication. The protein is FACT complex subunit POB3 (POB3) of Saccharomyces cerevisiae (strain ATCC 204508 / S288c) (Baker's yeast).